The sequence spans 493 residues: Growth-regulating factor 8 (493 aa).

In terms of domain architecture, QLQ spans 149-184 (AFSEAQWHELERQRNIYKYMMASVPVPPELLTPFPK). The WRC domain maps to 243 to 287 (DLEPWRCKRTDGKKWRCSRNVIPDQKYCERHTHKSRPRSRKHVES). 2 consecutive short sequence motifs (bipartite nuclear localization signal) follow at residues 248 to 258 (RCKRTDGKKWR) and 276 to 283 (KSRPRSRK). The segment at 270–302 (CERHTHKSRPRSRKHVESSHQSSHHNDIRTAKN) is disordered. Basic residues predominate over residues 273–283 (HTHKSRPRSRK).

It belongs to the GRF family. Predominantly expressed in shoot tips and flowers.

Its subcellular location is the nucleus. Its function is as follows. Transcription activator that plays a role in the regulation of cell expansion in leaf and cotyledons tissues. Component of a network formed by miR396, the GRFs and their interacting factors (GIFs) acting in the regulation of meristem function, at least partially through the control of cell proliferation. In Arabidopsis thaliana (Mouse-ear cress), this protein is Growth-regulating factor 8 (GRF8).